The sequence spans 342 residues: (Lyso)-N-acylphosphatidylethanolamine lipase (342 aa).

The AB hydrolase-1 domain maps to 70 to 201; that stretch reads PLVMVHGFGG…KAVASVLGRS (132 aa).

This sequence belongs to the peptidase S33 family. ABHD4/ABHD5 subfamily.

It carries out the reaction N-hexadecanoyl-1,2-di-(9Z-octadecenoyl)-sn-glycero-3-phosphoethanolamine + H2O = N-hexadecanoyl-1-(9Z-octadecenoyl)-sn-glycero-3-phosphoethanolamine + (9Z)-octadecenoate + H(+). It catalyses the reaction an N-acyl-1,2-diacyl-sn-glycero-3-phosphoethanolamine + H2O = N,1-diacyl-sn-glycero-3-phosphoethanolamine + a fatty acid + H(+). The catalysed reaction is N-hexadecanoyl-1-(9Z-octadecenoyl)-sn-glycero-3-phosphoethanolamine + H2O = N-hexadecanoyl-sn-glycero-3-phosphoethanolamine + (9Z)-octadecenoate + H(+). The enzyme catalyses N-octadecanoyl-1-(9Z-octadecenoyl)-sn-glycero-3-phosphoethanolamine + H2O = N-octadecanoyl-sn-glycero-3-phospho-ethanolamine + (9Z)-octadecenoate + H(+). It carries out the reaction N-eicosanoyl-1-(9Z-octadecenoyl)-sn-glycero-3-phosphoethanolamine + H2O = N-eicosanoyl-sn-glycero-3-phosphoethanolamine + (9Z)-octadecenoate + H(+). It catalyses the reaction N,1-di-(9Z-octadecenoyl)-sn-glycero-3-phosphoethanolamine + H2O = N-(9Z-octadecenoyl)-sn-glycero-3-phosphoethanolamine + (9Z)-octadecenoate + H(+). The catalysed reaction is N-(5Z,8Z,11Z,14Z-eicosatetraenoyl)-1-(9Z-octadecenoyl)-sn-glycero-3-phosphoethanolamine + H2O = N-(5Z,8Z,11Z,14Z-eicosatetraenoyl)-sn-glycero-3-phosphoethanolamine + (9Z)-octadecenoate + H(+). The enzyme catalyses 1-octadecanoyl-2-(9Z-octadecenoyl)-sn-glycero-3-phospho-(N-hexadecanoyl)-serine + H2O = 1-octadecanoyl-2-hydroxy-sn-glycero-3-phospho-(N-hexadecanoyl)-serine + (9Z)-octadecenoate + H(+). It carries out the reaction 1-O-(1Z-octadecenoyl)-2-(9Z-octadecenoyl)-sn-glycero-3-phospho-N-hexadecanoyl-ethanolamine + H2O = 1-O-(1Z-octadecenyl)-sn-glycero-3-phospho-N-hexadecanoyl-ethanolamine + (9Z)-octadecenoate + H(+). It catalyses the reaction N,1-diacyl-sn-glycero-3-phosphoethanolamine + H2O = N-acyl-sn-glycero-3-phosphoethanolamine + a fatty acid + H(+). Lysophospholipase selective for N-acyl phosphatidylethanolamine (NAPE). Contributes to the biosynthesis of N-acyl ethanolamines, including the endocannabinoid anandamide by hydrolyzing the sn-1 and sn-2 acyl chains from N-acyl phosphatidylethanolamine (NAPE) generating glycerophospho-N-acyl ethanolamine (GP-NAE), an intermediate for N-acyl ethanolamine biosynthesis. Hydrolyzes substrates bearing saturated, monounsaturated, polyunsaturated N-acyl chains. Shows no significant activity towards other lysophospholipids, including lysophosphatidylcholine, lysophosphatidylethanolamine and lysophosphatidylserine. In Homo sapiens (Human), this protein is (Lyso)-N-acylphosphatidylethanolamine lipase.